The primary structure comprises 67 residues: MKLTSLFIFVIVALSLLFSSTDAAPGKIPVKAIKQAGKVIGKGLRAINIAGTTHDVVSFFRPKKKKH.

Positions 1-23 (MKLTSLFIFVIVALSLLFSSTDA) are cleaved as a signal peptide.

Belongs to the moricin family. Monomer.

Its subcellular location is the secreted. In terms of biological role, antimicrobial peptide. Active against a broad spectrum of Gram-positive and Gram-negative bacteria including methicillin-resistant S.aureus ATCC 43 300, S.aureus BAA-39, pathogenic strains of L.monocytogenes, K.pneumoniae, E.coli O157:H7, S.typhimurium and multidrug-resistant S.typhimurium DT104 with minimum inhibitory concentration (MIC) of 1.4 uM for all except for S.aureus BAA-39. Also active against Serratia marcescens. Probably acts by disturbing membrane functions with its amphipathic alpha-helical structure. May protect a developing embryo from bacterial infection. This chain is Moricin, found in Manduca sexta (Tobacco hawkmoth).